The primary structure comprises 962 residues: Ubiquitin carboxyl-terminal hydrolase 4 (962 aa).

The DUSP domain maps to 11 to 122 (PDVETQKTEL…GQQPIVRKVV (112 aa)). Residues 27–216 (TLQRGAQWYL…LYQGQVLVIE (190 aa)) are necessary for interaction with SART3. Positions 133-141 (VEVYLLELK) match the Nuclear export signal motif. The Ubiquitin-like 1 domain occupies 142–226 (LCENSDPTNV…PQNEDGTWPR (85 aa)). A disordered region spans residues 220 to 249 (EDGTWPRQSLQSKSSTAPSRNFTTSSKPSA). Residues 225 to 249 (PRQSLQSKSSTAPSRNFTTSSKPSA) show a composition bias toward polar residues. Residues 229–295 (LQSKSSTAPS…SYNCQEPPSP (67 aa)) are required for USP4 activation by providing conformational flexibility between the DUSP and catalytic domains. Residues 302 to 922 (CGLGNLGNTC…AAYVLFYQRR (621 aa)) form the USP domain. C311 serves as the catalytic Nucleophile. The interval 384–386 (PQF) is regulates ubiquitin dissociation. The segment at 405–407 (LHE) is necessary for interaction with RBL2. Phosphoserine is present on S445. A necessary for interaction with RB1 and RBL2 region spans residues 459–463 (LVCPE). Zn(2+) contacts are provided by C461 and C464. Residues 483-571 (LKKDRIMEVF…IFVYEVCNTS (89 aa)) form the Ubiquitin-like 2 domain. Residues 485 to 774 (KDRIMEVFLV…SQPQKKKKAA (290 aa)) are interacts with DUSP and ubiquitin-like 1 domains and is required for USP4 activation. Residues 638 to 699 (EFLSSPLEPG…SESAQKVKGQ (62 aa)) form a disordered region. The residue at position 655 (S655) is a Phosphoserine. Residues 657–666 (EGDEEEEMDH) are compositionally biased toward acidic residues. S675 and S680 each carry phosphoserine. A Nuclear localization signal motif is present at residues 766–771 (QPQKKK). Zn(2+)-binding residues include C798 and C801. H880 functions as the Proton acceptor in the catalytic mechanism. The span at 928–937 (STSSLGSFPG) shows a compositional bias: low complexity. The interval 928-962 (STSSLGSFPGSDGGVKLSSSHQGMGDEEAYNMDTN) is disordered. Residues 952–962 (GDEEAYNMDTN) show a composition bias toward acidic residues.

Belongs to the peptidase C19 family. USP4 subfamily. As to quaternary structure, interacts with RB1 (both dephosphorylated and hypophosphorylated forms). Interacts with RBL1 and RBL2. Interacts with ADORA2A (via cytoplasmic C-terminus); the interaction is direct. Interacts with SART3; recruits USP4 to its substrate PRPF3. Phosphorylated at Ser-445 by PKB/AKT1 in response to EGF stimulus, promoting its ability deubiquitinate RHEB. Post-translationally, monoubiquitinated by TRIM21. Ubiquitination does not lead to its proteasomal degradation. Autodeubiquitinated. Expressed in brain, kidney, liver and spleen (at protein level).

It localises to the cytoplasm. The protein localises to the nucleus. It catalyses the reaction Thiol-dependent hydrolysis of ester, thioester, amide, peptide and isopeptide bonds formed by the C-terminal Gly of ubiquitin (a 76-residue protein attached to proteins as an intracellular targeting signal).. The completion of the deubiquitinase reaction is mediated by the DUSP and ubiquitin-like 1 domains which promotes the release of ubiquitin from the catalytic site enabling subsequent reactions to occur. Deubiquitinating enzyme that removes conjugated ubiquitin from target proteins. Deubiquitinates PDPK1. Deubiquitinates TRIM21. Deubiquitinates receptor ADORA2A which increases the amount of functional receptor at the cell surface. Deubiquitinates HAS2. Deubiquitinates RHEB in response to EGF signaling, promoting mTORC1 signaling. May regulate mRNA splicing through deubiquitination of the U4 spliceosomal protein PRPF3. This may prevent its recognition by the U5 component PRPF8 thereby destabilizing interactions within the U4/U6.U5 snRNP. May also play a role in the regulation of quality control in the ER. The polypeptide is Ubiquitin carboxyl-terminal hydrolase 4 (Usp4) (Mus musculus (Mouse)).